A 72-amino-acid chain; its full sequence is Translation initiation factor IF-1 (72 aa).

The region spanning 1-72 (MAKEDSIEMQ…SKGRIVFRSR (72 aa)) is the S1-like domain.

It belongs to the IF-1 family. Component of the 30S ribosomal translation pre-initiation complex which assembles on the 30S ribosome in the order IF-2 and IF-3, IF-1 and N-formylmethionyl-tRNA(fMet); mRNA recruitment can occur at any time during PIC assembly.

Its subcellular location is the cytoplasm. In terms of biological role, one of the essential components for the initiation of protein synthesis. Stabilizes the binding of IF-2 and IF-3 on the 30S subunit to which N-formylmethionyl-tRNA(fMet) subsequently binds. Helps modulate mRNA selection, yielding the 30S pre-initiation complex (PIC). Upon addition of the 50S ribosomal subunit IF-1, IF-2 and IF-3 are released leaving the mature 70S translation initiation complex. The chain is Translation initiation factor IF-1 from Aeromonas hydrophila subsp. hydrophila (strain ATCC 7966 / DSM 30187 / BCRC 13018 / CCUG 14551 / JCM 1027 / KCTC 2358 / NCIMB 9240 / NCTC 8049).